A 172-amino-acid polypeptide reads, in one-letter code: NADH-quinone oxidoreductase subunit B (172 aa).

Positions 42, 43, 107, and 136 each coordinate [4Fe-4S] cluster.

This sequence belongs to the complex I 20 kDa subunit family. In terms of assembly, NDH-1 is composed of 14 different subunits. Subunits NuoB, C, D, E, F, and G constitute the peripheral sector of the complex. [4Fe-4S] cluster is required as a cofactor.

It localises to the cell inner membrane. It carries out the reaction a quinone + NADH + 5 H(+)(in) = a quinol + NAD(+) + 4 H(+)(out). Functionally, NDH-1 shuttles electrons from NADH, via FMN and iron-sulfur (Fe-S) centers, to quinones in the respiratory chain. The immediate electron acceptor for the enzyme in this species is believed to be ubiquinone. Couples the redox reaction to proton translocation (for every two electrons transferred, four hydrogen ions are translocated across the cytoplasmic membrane), and thus conserves the redox energy in a proton gradient. This is NADH-quinone oxidoreductase subunit B from Sulfurovum sp. (strain NBC37-1).